An 896-amino-acid chain; its full sequence is Translation initiation factor IF-2 (896 aa).

2 disordered regions span residues 32-99 and 117-304; these read LAQA…TALP and EITS…KQAE. A compositionally biased stretch (polar residues) spans 35–48; the sequence is AGSSDTKNSPASKA. Residues 153 to 169 show a composition bias toward basic and acidic residues; that stretch reads TPERIEETPIIRTRTEP. The segment covering 203–214 has biased composition (low complexity); it reads AASTEETTQQQP. Over residues 215–227 the composition is skewed to polar residues; the sequence is RQNDAASHNNKQQ. The segment covering 228–241 has biased composition (low complexity); sequence PSGTSSRPASSAPS. The span at 256–280 shows a compositional bias: basic and acidic residues; it reads RGSERDRSKRSDESVKAFTGRDRYG. In terms of domain architecture, tr-type G spans 401–570; that stretch reads IRSPIVAFMG…ALQAEVLELK (170 aa). The tract at residues 410 to 417 is G1; the sequence is GHVDHGKT. 410 to 417 provides a ligand contact to GTP; sequence GHVDHGKT. Residues 435-439 are G2; it reads AITQH. The tract at residues 456–459 is G3; it reads DTPG. GTP is bound by residues 456–460 and 510–513; these read DTPGH and NKCD. The interval 510–513 is G4; sequence NKCD. Residues 546-548 are G5; the sequence is SAK.

This sequence belongs to the TRAFAC class translation factor GTPase superfamily. Classic translation factor GTPase family. IF-2 subfamily.

The protein localises to the cytoplasm. One of the essential components for the initiation of protein synthesis. Protects formylmethionyl-tRNA from spontaneous hydrolysis and promotes its binding to the 30S ribosomal subunits. Also involved in the hydrolysis of GTP during the formation of the 70S ribosomal complex. The protein is Translation initiation factor IF-2 of Chlamydia trachomatis serovar L2 (strain ATCC VR-902B / DSM 19102 / 434/Bu).